Here is a 132-residue protein sequence, read N- to C-terminus: Antileukoproteinase (132 aa).

Positions 1-24 (MKFSGLFPFLLLALGTLALWAVEG) are cleaved as a signal peptide. Positions 28–76 (EALKAGACPPRKSAQCFGNEKPRCSSDWQCPHKKKCCLDTCGTECLDPV) constitute a WAP 1 domain. 4 cysteine pairs are disulfide-bonded: C35/C64, C43/C68, C51/C63, and C57/C72. A glycan (N-linked (GlcNAc...) asparagine) is linked at N77. Positions 82–130 (VKKKPGTCPVIHGQCLMLKPLNHCETDDQCIGALKCCKAMCGKVCLSPV) constitute a WAP 2 domain. 4 disulfides stabilise this stretch: C89–C118, C96–C122, C105–C117, and C111–C126.

As to quaternary structure, interacts with GRN; interaction protects progranulin from proteolysis. As to expression, detected in bronchoalveolar fluid (at protein level). Detected in large and small intestine, trachea, skin, lung and tongue.

It is found in the secreted. Functionally, acid-stable proteinase inhibitor with strong affinities for trypsin, chymotrypsin, elastase, and cathepsin G. Modulates the inflammatory and immune responses after bacterial infection, and after infection by the intracellular parasite L.major. Down-regulates responses to bacterial lipopolysaccharide (LPS). Plays a role in regulating the activation of NF-kappa-B and inflammatory responses. Has antimicrobial activity against mycobacteria, but not against salmonella. Contributes to normal resistance against infection by M.tuberculosis. Required for normal resistance to infection by L.major. Required for normal wound healing, probably by preventing tissue damage by limiting protease activity. Together with ELANE, required for normal differentiation and proliferation of bone marrow myeloid cells. The sequence is that of Antileukoproteinase (SLPI) from Ovis aries (Sheep).